Consider the following 199-residue polypeptide: uncharacterized protein (199 aa).

A run of 4 helical transmembrane segments spans residues 41 to 61 (LFIP…AFIC), 72 to 92 (SLIC…CSPW), 109 to 129 (TVWV…SIFV), and 145 to 165 (VTYS…LLNL).

It to M.pneumoniae MPN_037.

It is found in the cell membrane. This is an uncharacterized protein from Mycoplasma pneumoniae (strain ATCC 29342 / M129 / Subtype 1) (Mycoplasmoides pneumoniae).